The following is a 385-amino-acid chain: Sensor histidine kinase Hik2 (385 aa).

The GAF domain occupies 11-131 (ALCRTQLELV…QQVAQTLAIA (121 aa)). [3Fe-4S] cluster is bound at residue Cys-13. Positions 142–270 (SHSPAQPLDQ…PQLPPIWLEE (129 aa)) are DHp domain, may sense NaCl. Positions 158–381 (DLLHQLRNPV…AFTLAIPWQM (224 aa)) constitute a Histidine kinase domain. His-161 is subject to Phosphohistidine; by autocatalysis.

The protein belongs to the chloroplast sensor kinase protein family. Hexamers; upon treatment with 0.5 M NaCl only tetramers are seen. The tetramers are probably inactive. It depends on [3Fe-4S] cluster as a cofactor. Post-translationally, autophosphorylates, possibly on His-161.

The catalysed reaction is ATP + protein L-histidine = ADP + protein N-phospho-L-histidine.. Member of 2 two-component regulatory system(s) Hik2/Rre1 and Hik2/RppA. Transduces PQ (plastoquinone) redox signals to photosystem gene expression machinery during the adjustment of photosystem stoichiometry. Reduced PQ suppresses its autophosphorylation activity (i.e. kinase activity is higher under oxidizing conditions). As part of a two-component regulatory system with Rre1, controls expression of sigB and several other genes in response to hyperosmotic stress. May transfer phosphate to RppA in a possible Hik2/RppA two-component system. The polypeptide is Sensor histidine kinase Hik2 (Thermosynechococcus vestitus (strain NIES-2133 / IAM M-273 / BP-1)).